Reading from the N-terminus, the 206-residue chain is Small ribosomal subunit protein uS4 (206 aa).

The region spanning 96 to 161 (RRLDNVVYRM…QGRIQAALAL (66 aa)) is the S4 RNA-binding domain.

The protein belongs to the universal ribosomal protein uS4 family. As to quaternary structure, part of the 30S ribosomal subunit. Contacts protein S5. The interaction surface between S4 and S5 is involved in control of translational fidelity.

In terms of biological role, one of the primary rRNA binding proteins, it binds directly to 16S rRNA where it nucleates assembly of the body of the 30S subunit. With S5 and S12 plays an important role in translational accuracy. In Legionella pneumophila (strain Paris), this protein is Small ribosomal subunit protein uS4.